A 65-amino-acid polypeptide reads, in one-letter code: Prokaryotic ubiquitin-like protein Pup (65 aa).

Over residues 1–13 (MAQEQKQPRKSSE) the composition is skewed to basic and acidic residues. The tract at residues 1 to 34 (MAQEQKQPRKSSEADEAVEAVAETDVSERKEALD) is disordered. The segment at 21 to 59 (VAETDVSERKEALDSDVDDILDEIDDVLETNAEDFVKSF) is ARC ATPase binding. Positions 25 to 49 (DVSERKEALDSDVDDILDEIDDVLE) form a coiled coil. An Isoglutamyl lysine isopeptide (Glu-Lys) (interchain with K-? in acceptor proteins) cross-link involves residue glutamate 65.

The protein belongs to the prokaryotic ubiquitin-like protein family. As to quaternary structure, strongly interacts with the proteasome-associated ATPase ARC through a hydrophobic interface; the interacting region of Pup lies in its C-terminal half. There is one Pup binding site per ARC hexamer ring.

Its pathway is protein degradation; proteasomal Pup-dependent pathway. Functionally, protein modifier that is covalently attached to lysine residues of substrate proteins, thereby targeting them for proteasomal degradation. The tagging system is termed pupylation. In Nocardioides sp. (strain ATCC BAA-499 / JS614), this protein is Prokaryotic ubiquitin-like protein Pup.